We begin with the raw amino-acid sequence, 123 residues long: Small ribosomal subunit protein uS12 (123 aa).

Residues 1 to 32 (MPTINQLVRHGRKRSVKKTNTPALKASPQKRG) are disordered. Asp-89 carries the 3-methylthioaspartic acid modification.

Belongs to the universal ribosomal protein uS12 family. Part of the 30S ribosomal subunit. Contacts proteins S8 and S17. May interact with IF1 in the 30S initiation complex.

In terms of biological role, with S4 and S5 plays an important role in translational accuracy. Interacts with and stabilizes bases of the 16S rRNA that are involved in tRNA selection in the A site and with the mRNA backbone. Located at the interface of the 30S and 50S subunits, it traverses the body of the 30S subunit contacting proteins on the other side and probably holding the rRNA structure together. The combined cluster of proteins S8, S12 and S17 appears to hold together the shoulder and platform of the 30S subunit. This is Small ribosomal subunit protein uS12 from Desulfatibacillum aliphaticivorans.